Consider the following 431-residue polypeptide: Putative F-box/FBD/LRR-repeat protein At3g56780 (431 aa).

Residues 6 to 62 (CSCINELPDDLILKILSFVSTKHVVVTSLLSKKWKSLWTRVPILKYDVRDHTRFERF) enclose the F-box domain. LRR repeat units lie at residues 56–82 (HTRFERFLDKSLFSHQSHVLESLHVEL), 88–113 (NKDIGPWIRTALHHHHCHLRELEIDA), 135–161 (LKGIVIDVEAPLTTVSLPSLKTLHIDH), 162–187 (SSLFDFGSLQMLLSNCNFITDLMVIR), 209–236 (LEGLKDVISISSSSAVCLPLLKTLHVAR), 237–262 (MEDFNNDSFCRLLSNCPVLSDLTLEE), 264–285 (TSDVLLNLDIDMPYLQRLSIIT), and 357–382 (CSERSVEMLVDLLLCFTKLVVLKLEH). The FBD domain occupies 391–423 (RWEPPSLVPECLLSSLEALEWKGYTGRYGDKDL).

The polypeptide is Putative F-box/FBD/LRR-repeat protein At3g56780 (Arabidopsis thaliana (Mouse-ear cress)).